The primary structure comprises 453 residues: Zinc finger protein Pegasus (453 aa).

C2H2-type zinc fingers lie at residues 101–123 (LKCR…IRIH), 129–151 (HRCH…MRSH), and 157–180 (YKCE…RRKH). A compositionally biased stretch (polar residues) spans 279 to 293 (GQLSSLPPDTQNPAS). Residues 279-375 (GQLSSLPPDT…QPSTPAPALP (97 aa)) are disordered. Over residues 315 to 332 (CSSAVSTSVAQSSSPASP) the composition is skewed to low complexity. Residues 356–368 (RTSTPSISNSQPS) show a composition bias toward polar residues. 2 C2H2-type zinc fingers span residues 383–405 (HHCQ…MGCH) and 411–438 (FQCN…CCQH).

This sequence belongs to the Ikaros C2H2-type zinc-finger protein family. As to quaternary structure, probably self-associates.

It is found in the nucleus. Transcriptional repressor that binds the core 5'GNNTGTNG-3' DNA consensus sequence. In Xenopus laevis (African clawed frog), this protein is Zinc finger protein Pegasus (ikzf5).